The primary structure comprises 174 residues: Secretory-abundant heat soluble protein 2 (174 aa).

The signal sequence occupies residues 1–19 (MHRFVLALVVFAGAAIVWA). The interval 30–60 (EWTGKPWMGKWESDPSKDENVEEFKKKLQLP) is SAHS-c1. An SAHS-c2 region spans residues 77-105 (YKKGDEYHHKIIINDAHYKNDIVFKLGQE). N-linked (GlcNAc...) asparagine glycosylation occurs at Asn111. Residues 118-172 (KYEDKDGALVGSVHYTGTKEQSLDKTINNVFKLEGDHLVKTSTIEGVTMKRHYNK) form an SAHS-c3 region.

Belongs to the Secretory-abundant heat soluble protein (SAHS) family.

It localises to the secreted. In terms of biological role, secreted heat soluble protein acting as a molecular shield in water-deficient condition. Tardigrade-specific intrinsically disordered proteins (TDPs) are essential for desiccation tolerance by forming non-crystalline amorphous solids upon desiccation, and this vitrified state mirrors their protective capabilities. The sequence is that of Secretory-abundant heat soluble protein 2 from Ramazzottius varieornatus (Water bear).